A 141-amino-acid polypeptide reads, in one-letter code: Nucleoside triphosphatase NudI (141 aa).

The region spanning 1–141 is the Nudix hydrolase domain; that stretch reads MRQRTIVCPL…RVTLSQKGLL (141 aa). The short motif at 38 to 59 is the Nudix box element; that stretch reads GGVEPVERIEEALRREIREELG.

This sequence belongs to the Nudix hydrolase family. NudI subfamily. In terms of assembly, monomer. Mg(2+) serves as cofactor.

The enzyme catalyses a ribonucleoside 5'-triphosphate + H2O = a ribonucleoside 5'-phosphate + diphosphate + H(+). The catalysed reaction is a 2'-deoxyribonucleoside 5'-triphosphate + H2O = a 2'-deoxyribonucleoside 5'-phosphate + diphosphate + H(+). It catalyses the reaction dUTP + H2O = dUMP + diphosphate + H(+). It carries out the reaction dTTP + H2O = dTMP + diphosphate + H(+). The enzyme catalyses dCTP + H2O = dCMP + diphosphate + H(+). Catalyzes the hydrolysis of nucleoside triphosphates, with a preference for pyrimidine deoxynucleoside triphosphates (dUTP, dTTP and dCTP). The protein is Nucleoside triphosphatase NudI of Klebsiella pneumoniae (strain 342).